Consider the following 148-residue polypeptide: Lysozyme-like protein 6 (148 aa).

The signal sequence occupies residues 1–19; it reads MLKALFICVASCLLVVNDG. The region spanning 20 to 148 is the C-type lysozyme domain; that stretch reads NIIHRCSLAK…SYWMTGCHLG (129 aa). Cystine bridges form between C25–C145, C49–C133, C83–C98, and C94–C112. Residue E54 is part of the active site. The N-linked (GlcNAc...) asparagine glycan is linked to N58. D71 is a catalytic residue.

The protein belongs to the glycosyl hydrolase 22 family. Monomer. As to expression, expressed strongly in testis and epididymis and weakly in seminal vesicle, vas deferens, kidney and spleen. Highly expressed in primary spermatocytes and round spermatids (at protein level).

Its subcellular location is the secreted. It is found in the cell surface. The protein localises to the cell projection. It localises to the cilium. The protein resides in the flagellum. It carries out the reaction Hydrolysis of (1-&gt;4)-beta-linkages between N-acetylmuramic acid and N-acetyl-D-glucosamine residues in a peptidoglycan and between N-acetyl-D-glucosamine residues in chitodextrins.. In terms of biological role, may be involved sperm-egg plasma membrane adhesion and fusion during fertilization. Exhibits bacteriolytic activity in vitro against Micrococcus luteus and Staphylococcus aureus. Shows weak bacteriolytic activity against Gram-positive bacteria at physiological pH. Bacteriolytic activity is pH-dependent, with a maximum at around pH 5.6. This chain is Lysozyme-like protein 6 (Lyzl6), found in Mus musculus (Mouse).